The primary structure comprises 264 residues: Putative hydro-lyase RBAM_004300 (264 aa).

The protein belongs to the D-glutamate cyclase family.

The protein is Putative hydro-lyase RBAM_004300 of Bacillus velezensis (strain DSM 23117 / BGSC 10A6 / LMG 26770 / FZB42) (Bacillus amyloliquefaciens subsp. plantarum).